The following is a 247-amino-acid chain: ATP synthase subunit a, chloroplastic (247 aa).

Helical transmembrane passes span 38–58 (QVLI…TLAV), 95–115 (VPFI…GALL), 134–154 (INTT…AGLT), 199–219 (LVVV…VMFL), and 220–240 (GLFT…AYIG).

It belongs to the ATPase A chain family. In terms of assembly, F-type ATPases have 2 components, CF(1) - the catalytic core - and CF(0) - the membrane proton channel. CF(1) has five subunits: alpha(3), beta(3), gamma(1), delta(1), epsilon(1). CF(0) has four main subunits: a, b, b' and c.

Its subcellular location is the plastid. It is found in the chloroplast thylakoid membrane. Functionally, key component of the proton channel; it plays a direct role in the translocation of protons across the membrane. This chain is ATP synthase subunit a, chloroplastic, found in Vitis vinifera (Grape).